The primary structure comprises 290 residues: Cbb3-type cytochrome c oxidase subunit CcoP (290 aa).

Residues 1–22 (MSVKPTKQKPGEPPTTGHSWDG) form a disordered region. Over 1–37 (MSVKPTKQKPGEPPTTGHSWDGIEEFDNPMPRWWLWT) the chain is Cytoplasmic. Residues 38-58 (FYVTIVWAIGYSILYPAWPLI) traverse the membrane as a helical segment. Residues 59-290 (NGATNGLIGH…VYVHGLGGGE (232 aa)) lie on the Periplasmic side of the membrane. 2 Cytochrome c domains span residues 109-199 (YATN…LQIS) and 206-287 (ALSA…HGLG). Positions 122, 125, 126, 174, 219, 222, 223, and 264 each coordinate heme c.

Belongs to the CcoP / FixP family. As to quaternary structure, component of the cbb3-type cytochrome c oxidase at least composed of CcoN, CcoO, CcoQ and CcoP. Heme c is required as a cofactor.

The protein localises to the cell inner membrane. It participates in energy metabolism; oxidative phosphorylation. Its function is as follows. C-type cytochrome. Part of the cbb3-type cytochrome c oxidase complex. CcoP subunit is required for transferring electrons from donor cytochrome c via its heme groups to CcoO subunit. From there, electrons are shuttled to the catalytic binuclear center of CcoN subunit where oxygen reduction takes place. The complex also functions as a proton pump. The protein is Cbb3-type cytochrome c oxidase subunit CcoP of Cereibacter sphaeroides (strain ATCC 17023 / DSM 158 / JCM 6121 / CCUG 31486 / LMG 2827 / NBRC 12203 / NCIMB 8253 / ATH 2.4.1.) (Rhodobacter sphaeroides).